A 349-amino-acid chain; its full sequence is Spermidine/putrescine import ATP-binding protein PotA (349 aa).

One can recognise an ABC transporter domain in the interval 7-237 (IELKGITKSY…PANSFVAKFI (231 aa)). 39–46 (GPSGCGKT) is a binding site for ATP.

The protein belongs to the ABC transporter superfamily. Spermidine/putrescine importer (TC 3.A.1.11.1) family. In terms of assembly, the complex is composed of two ATP-binding proteins (PotA), two transmembrane proteins (PotB and PotC) and a solute-binding protein (PotD).

Its subcellular location is the cell membrane. It catalyses the reaction ATP + H2O + polyamine-[polyamine-binding protein]Side 1 = ADP + phosphate + polyamineSide 2 + [polyamine-binding protein]Side 1.. Part of the ABC transporter complex PotABCD involved in spermidine/putrescine import. Responsible for energy coupling to the transport system. In Clostridium perfringens (strain SM101 / Type A), this protein is Spermidine/putrescine import ATP-binding protein PotA.